Consider the following 379-residue polypeptide: uncharacterized protein (379 aa).

The helical transmembrane segment at 7-27 threads the bilayer; that stretch reads VYIFAGIFLFIALIILIKIFF.

The protein localises to the membrane. This is an uncharacterized protein from Caenorhabditis elegans.